We begin with the raw amino-acid sequence, 240 residues long: U1 small nuclear ribonucleoprotein C (240 aa).

The segment at 4 to 36 adopts a Matrin-type zinc-finger fold; sequence YYCEYCDIYLTHSSPVGRRQHIQGRKHISAKIE. Disordered stretches follow at residues 86-122 and 175-240; these read GMKH…SKYH and IDSD…SVDA. Composition is skewed to basic and acidic residues over residues 178–194 and 203–219; these read DPVK…DNAI and DQGD…HADH. A compositionally biased stretch (polar residues) spans 226–240; the sequence is TDGTANGNDQVSVDA.

It belongs to the U1 small nuclear ribonucleoprotein C family. In terms of assembly, U1 snRNP is composed of the 7 core Sm proteins B/B', D1, D2, D3, E, F and G that assemble in a heptameric protein ring on the Sm site of the small nuclear RNA to form the core snRNP, and at least 3 U1 snRNP-specific proteins U1-70K, U1-A and U1-C. U1-C interacts with U1 snRNA and the 5' splice-site region of the pre-mRNA.

The protein localises to the nucleus. Component of the spliceosomal U1 snRNP, which is essential for recognition of the pre-mRNA 5' splice-site and the subsequent assembly of the spliceosome. U1-C is directly involved in initial 5' splice-site recognition for both constitutive and regulated alternative splicing. The interaction with the 5' splice-site seems to precede base-pairing between the pre-mRNA and the U1 snRNA. Stimulates commitment or early (E) complex formation by stabilizing the base pairing of the 5' end of the U1 snRNA and the 5' splice-site region. This is U1 small nuclear ribonucleoprotein C from Plasmodium vivax (strain Salvador I).